A 242-amino-acid chain; its full sequence is Purine nucleoside phosphorylase PA4543 (242 aa).

Positions 69, 103, and 120 each coordinate Zn(2+).

It belongs to the purine nucleoside phosphorylase YfiH/LACC1 family. As to quaternary structure, homodimer. Requires Cu(2+) as cofactor. It depends on Zn(2+) as a cofactor.

It carries out the reaction adenosine + phosphate = alpha-D-ribose 1-phosphate + adenine. The catalysed reaction is S-methyl-5'-thioadenosine + phosphate = 5-(methylsulfanyl)-alpha-D-ribose 1-phosphate + adenine. It catalyses the reaction inosine + phosphate = alpha-D-ribose 1-phosphate + hypoxanthine. The enzyme catalyses adenosine + H2O + H(+) = inosine + NH4(+). Functionally, purine nucleoside enzyme that catalyzes the phosphorolysis of adenosine and inosine nucleosides, yielding D-ribose 1-phosphate and the respective free bases, adenine and hypoxanthine. Also catalyzes the phosphorolysis of S-methyl-5'-thioadenosine into adenine and S-methyl-5-thio-alpha-D-ribose 1-phosphate. Also has adenosine deaminase activity. The protein is Purine nucleoside phosphorylase PA4543 of Pseudomonas aeruginosa (strain ATCC 15692 / DSM 22644 / CIP 104116 / JCM 14847 / LMG 12228 / 1C / PRS 101 / PAO1).